The chain runs to 232 residues: 2-C-methyl-D-erythritol 4-phosphate cytidylyltransferase (232 aa).

This sequence belongs to the IspD/TarI cytidylyltransferase family. IspD subfamily.

It carries out the reaction 2-C-methyl-D-erythritol 4-phosphate + CTP + H(+) = 4-CDP-2-C-methyl-D-erythritol + diphosphate. It participates in isoprenoid biosynthesis; isopentenyl diphosphate biosynthesis via DXP pathway; isopentenyl diphosphate from 1-deoxy-D-xylulose 5-phosphate: step 2/6. In terms of biological role, catalyzes the formation of 4-diphosphocytidyl-2-C-methyl-D-erythritol from CTP and 2-C-methyl-D-erythritol 4-phosphate (MEP). This chain is 2-C-methyl-D-erythritol 4-phosphate cytidylyltransferase, found in Deinococcus radiodurans (strain ATCC 13939 / DSM 20539 / JCM 16871 / CCUG 27074 / LMG 4051 / NBRC 15346 / NCIMB 9279 / VKM B-1422 / R1).